The chain runs to 234 residues: MLTLLAILVVSYIVGSIPTSLIAGKMLKSIDIRDFGSGNAGGTNAFRVLGWKTGLTVTLIDIIKGVVAAVSVVAFFRHHPIDVFPDINEVALRLLAGMSAVIGHVFTVFAGFRGGKGVSTAAGMLIGIAPVSMLMVIGVFLLTVYISRHVSVASILAAIAFPLIIAIRKYLFELGAGLDYYIKLFNAKFFFHDSLDYHLIIFGLIVAIAIIYTHRANIKRLLAGTENRISFGKH.

6 helical membrane-spanning segments follow: residues 4–24 (LLAI…LIAG), 56–76 (TVTL…VAFF), 90–110 (VALR…TVFA), 122–142 (AGML…VFLL), 152–172 (VASI…KYLF), and 191–211 (FHDS…IAII).

It belongs to the PlsY family. As to quaternary structure, probably interacts with PlsX.

It is found in the cell inner membrane. The catalysed reaction is an acyl phosphate + sn-glycerol 3-phosphate = a 1-acyl-sn-glycero-3-phosphate + phosphate. The protein operates within lipid metabolism; phospholipid metabolism. Catalyzes the transfer of an acyl group from acyl-phosphate (acyl-PO(4)) to glycerol-3-phosphate (G3P) to form lysophosphatidic acid (LPA). This enzyme utilizes acyl-phosphate as fatty acyl donor, but not acyl-CoA or acyl-ACP. This is Glycerol-3-phosphate acyltransferase from Chlorobium chlorochromatii (strain CaD3).